Reading from the N-terminus, the 567-residue chain is Geranylgeranyl transferase type-2 subunit alpha (567 aa).

6 PFTA repeats span residues 44–78 (LDES…HLET), 88–122 (LVKA…RLPE), 124–158 (NWAR…QAAV), 159–193 (APAE…QLHP), 207–241 (VLLK…RAEP), and 363–397 (VLQS…ALDP). Phosphoserine is present on serine 98. LRR repeat units lie at residues 442 to 463 (DVRV…EQLL), 464 to 486 (LVTH…AALR), 487 to 508 (CLEV…ANLP), 509 to 530 (RLQE…QPLV), and 534 to 555 (RLVL…QERL).

The protein belongs to the protein prenyltransferase subunit alpha family. In terms of assembly, heterotrimer composed of RABGGTA, RABGGTB and CHM; within this trimer, RABGGTA and RABGGTB form the catalytic component B, while CHM (component A) mediates peptide substrate binding. The Rab GGTase dimer (RGGT) interacts with CHM (component A) prior to Rab protein binding; the association is stabilized by geranylgeranyl pyrophosphate (GGpp). The CHM:RGGT:Rab complex is destabilized by GGpp. Interacts with non-phosphorylated form of RAB8A; phosphorylation of RAB8A at 'Thr-72' disrupts this interaction. In terms of tissue distribution, most abundant in the heart, brain, spleen and liver. Less in the lung, muscle, kidney and testis; in these tissues less abundant than the beta subunit.

The catalysed reaction is geranylgeranyl diphosphate + L-cysteinyl-[protein] = S-geranylgeranyl-L-cysteinyl-[protein] + diphosphate. Its activity is regulated as follows. The enzymatic reaction requires the aid of a Rab escort protein (also called component A), such as CHM. In terms of biological role, catalyzes the transfer of a geranylgeranyl moiety from geranylgeranyl diphosphate to both cysteines of Rab proteins with the C-terminal sequence -XXCC, -XCXC and -CCXX, such as RAB1A, RAB3A, RAB5A and RAB7A. This is Geranylgeranyl transferase type-2 subunit alpha (Rabggta) from Rattus norvegicus (Rat).